Consider the following 280-residue polypeptide: Elongation factor 1-delta (280 aa).

An N-acetylalanine modification is found at alanine 2. N6-acetyllysine is present on lysine 17. A phosphoserine mark is found at serine 37, serine 44, serine 60, serine 86, and serine 106. Lysine 107 carries the N6-acetyllysine modification. Residues 113-171 (SALEKSSPAHRATTPQTQHVSPMRQVEPPSRKAATATEDDEDDDIDLFGSDEEEDKEAT) are disordered. Lysine 117 bears the N6-acetyllysine; alternate mark. Lysine 117 bears the N6-succinyllysine; alternate mark. Residue serine 119 is modified to Phosphoserine. Position 129 is a phosphothreonine (threonine 129). A Phosphoserine modification is found at serine 133. Position 147 is a phosphothreonine (threonine 147). The segment covering 149 to 168 (TEDDEDDDIDLFGSDEEEDK) has biased composition (acidic residues). Position 162 is a phosphoserine; by CK2 (serine 162).

Belongs to the EF-1-beta/EF-1-delta family. EF-1 is composed of 4 subunits: alpha, beta, delta, and gamma.

Its function is as follows. EF-1-beta and EF-1-delta stimulate the exchange of GDP bound to EF-1-alpha to GTP. In Bos taurus (Bovine), this protein is Elongation factor 1-delta (EEF1D).